The following is a 422-amino-acid chain: Putative polyketide beta-ketoacyl synthase 1 (422 aa).

The 415-residue stretch at 2 to 416 (SRRVVVTGIG…GFQSAVVLTG (415 aa)) folds into the Ketosynthase family 3 (KS3) domain. Active-site for beta-ketoacyl synthase activity residues include Cys169, His309, and His346.

It belongs to the thiolase-like superfamily. Beta-ketoacyl-ACP synthases family.

Its function is as follows. Involved in developmentally regulated synthesis of a compound biosynthetically related to polyketide antibiotics which is essential for spore color in Streptomyces halstedii. The chain is Putative polyketide beta-ketoacyl synthase 1 (sch1) from Streptomyces halstedii.